A 233-amino-acid chain; its full sequence is MKFEYPLIPATLLRRYKRFLADVELSDGSTITVHCPNTGSMRNCIVENSPCWLLDSANPKRKYRYSLERVTTPTGAVAGINSASANGLVIAAIENGVISELQGYDELAREQRYGDEKSRIDILLSKPEEQCYIEVKSVTLEEGKGEGFFPDAVSTRGQKHLRELMAMRSQGHRAVLFFCVQHSGITKVAAAEHIDPAYAALFKQAVNEGVEVIAYGVDLGIEGSVITKKLKVV.

The protein belongs to the SfsA family.

The chain is Sugar fermentation stimulation protein homolog from Saccharophagus degradans (strain 2-40 / ATCC 43961 / DSM 17024).